We begin with the raw amino-acid sequence, 304 residues long: Secreted mono- and diacylglycerol lipase MDL3 (304 aa).

The N-terminal stretch at 1–19 (MIVGPVISLLLSYFVLVSG) is a signal peptide. Cysteine 55 and cysteine 297 are oxidised to a cystine. The N-linked (GlcNAc...) asparagine glycan is linked to asparagine 161. Serine 171 acts as the Nucleophile in catalysis. Residues aspartate 228 and histidine 281 contribute to the active site.

This sequence belongs to the AB hydrolase superfamily. Lipase family. Class 3 subfamily.

It is found in the secreted. The protein localises to the cell wall. It carries out the reaction a monoacylglycerol + H2O = glycerol + a fatty acid + H(+). It catalyses the reaction a diacylglycerol + H2O = a monoacylglycerol + a fatty acid + H(+). Functionally, secreted lipase involved in Dandruff and seborrheic dermatitis (D/SD) probably via lipase-mediated breakdown of sebaceous lipids and release of irritating free fatty acids. Shows activity against monoglyceride and diglyceride substrates, but not triglyceride substrates and does not exhibit regio-selective production of diacylglycerols. Hydrolyzes distearin, dilinolein, dipalmitoylglycerol and dipalmitolein. Cleaves oleic acid from 1,2 isomers of diolein on both the 1 and the 2 position of the glycerol backbone, resulting mainly in free fatty acids but no monoolein is detected. Shows activity on monoolein and liberates mostly free fatty acids, but can also perform the reverse reaction and produce diolein. This is Secreted mono- and diacylglycerol lipase MDL3 from Malassezia globosa (strain ATCC MYA-4612 / CBS 7966) (Dandruff-associated fungus).